Reading from the N-terminus, the 108-residue chain is Small ribosomal subunit protein uS17 (108 aa).

It belongs to the universal ribosomal protein uS17 family. Part of the 30S ribosomal subunit.

In terms of biological role, one of the primary rRNA binding proteins, it binds specifically to the 5'-end of 16S ribosomal RNA. The protein is Small ribosomal subunit protein uS17 of Methanospirillum hungatei JF-1 (strain ATCC 27890 / DSM 864 / NBRC 100397 / JF-1).